A 255-amino-acid polypeptide reads, in one-letter code: Putative glycyl-radical enzyme activating enzyme MJ1632 (255 aa).

Residues 30-245 (SHISLSDKIT…SNVSCSLDFK (216 aa)) enclose the Radical SAM core domain. [4Fe-4S] cluster-binding residues include C45, C49, and C52. Residues 51 to 53 (YCF), G88, and 134 to 136 (DLK) each bind S-adenosyl-L-methionine.

Belongs to the organic radical-activating enzymes family. It depends on [4Fe-4S] cluster as a cofactor.

The enzyme catalyses glycyl-[protein] + reduced [flavodoxin] + S-adenosyl-L-methionine = glycin-2-yl radical-[protein] + semiquinone [flavodoxin] + 5'-deoxyadenosine + L-methionine + H(+). The sequence is that of Putative glycyl-radical enzyme activating enzyme MJ1632 from Methanocaldococcus jannaschii (strain ATCC 43067 / DSM 2661 / JAL-1 / JCM 10045 / NBRC 100440) (Methanococcus jannaschii).